Reading from the N-terminus, the 165-residue chain is Urease accessory protein UreE (165 aa).

A disordered region spans residues 137-156; it reads EAGAYQSAPHGHSHAHGHDH.

This sequence belongs to the UreE family.

The protein localises to the cytoplasm. Involved in urease metallocenter assembly. Binds nickel. Probably functions as a nickel donor during metallocenter assembly. This is Urease accessory protein UreE from Pseudomonas putida (strain GB-1).